The primary structure comprises 134 residues: (R)-specific enoyl-CoA hydratase (134 aa).

Positions 5–119 (SLEVGQKARL…ATLTTRIFTQ (115 aa)) constitute a MaoC-like domain. A (3R)-3-hydroxyacyl-CoA is bound by residues 32 to 37 (DFNPLH), Gly55, and Phe84.

In terms of assembly, homodimer.

It catalyses the reaction a (3R)-3-hydroxyacyl-CoA = a (2E)-enoyl-CoA + H2O. Catalyzes the hydration of trans-2-enoyl-CoA with a chain-length of 4-6 carbon atoms, forming the corresponding (3R)-3-hydroxyacyl-CoA. This chain is (R)-specific enoyl-CoA hydratase (phaJ), found in Aeromonas caviae (Aeromonas punctata).